Here is a 189-residue protein sequence, read N- to C-terminus: Interferon alpha-G (189 aa).

Residues 1–23 (MAPAWSLLLALLLLSCNAICSLG) form the signal peptide. Intrachain disulfides connect Cys24–Cys122 and Cys52–Cys162.

Belongs to the alpha/beta interferon family.

The protein resides in the secreted. Functionally, produced by macrophages, IFN-alpha have antiviral activities. Interferon stimulates the production of two enzymes: a protein kinase and an oligoadenylate synthetase. The protein is Interferon alpha-G (IFNAG) of Bos taurus (Bovine).